The following is a 378-amino-acid chain: tRNA-specific 2-thiouridylase MnmA (378 aa).

ATP-binding positions include 6-13 and Leu-32; that span reads AMSGGVDS. The Nucleophile role is filled by Cys-101. Cys-101 and Cys-199 form a disulfide bridge. Gly-125 is an ATP binding site. Positions 148–150 are interaction with tRNA; that stretch reads KDQ. Cys-199 (cysteine persulfide intermediate) is an active-site residue.

This sequence belongs to the MnmA/TRMU family.

The protein resides in the cytoplasm. The catalysed reaction is S-sulfanyl-L-cysteinyl-[protein] + uridine(34) in tRNA + AH2 + ATP = 2-thiouridine(34) in tRNA + L-cysteinyl-[protein] + A + AMP + diphosphate + H(+). In terms of biological role, catalyzes the 2-thiolation of uridine at the wobble position (U34) of tRNA, leading to the formation of s(2)U34. The protein is tRNA-specific 2-thiouridylase MnmA of Renibacterium salmoninarum (strain ATCC 33209 / DSM 20767 / JCM 11484 / NBRC 15589 / NCIMB 2235).